The sequence spans 889 residues: Rho GTPase-activating protein 27 (889 aa).

In terms of domain architecture, SH3 spans 6–69; the sequence is VGDVYVLVEH…PAQYVRELPA (64 aa). The disordered stretch occupies residues 104–132; that stretch reads AGPDGAPEESGGRASSLCGPAQRGAATQR. Residues Ser-156, Ser-216, and Ser-249 each carry the phosphoserine modification. WW domains follow at residues 246 to 280 and 299 to 333; these read PLPSPVWETHTDAGTGRPYYYNPDTGVTTWESPFE and VSLETEWGQYWDEESRRVFFYNPLTGETAWEDEAE. Over residues 329–341 the composition is skewed to acidic residues; it reads EDEAENEPEEELE. Positions 329–397 are disordered; that stretch reads EDEAENEPEE…SPLTTPPGWS (69 aa). Position 347 is a phosphoserine (Ser-347). Low complexity predominate over residues 383–395; the sequence is EPGPTSPLTTPPG. The WW 3 domain maps to 411–444; the sequence is HFTQEQWVRLEDPHGKPYFYNPEDSSVRWELPQV. The disordered stretch occupies residues 447–474; sequence PAPRSIHKSSQDGDTPAQASPPEEKVPA. At Ser-456 the chain carries Phosphoserine. Thr-461 is subject to Phosphothreonine. Position 466 is a phosphoserine (Ser-466). The PH domain maps to 496-612; it reads TLDKAGVLHR…WHKAIAQGIQ (117 aa). The tract at residues 617–655 is disordered; it reads ELPPEESESSRVDFGSSERLGSWQEKEEDARPNAAAPAL. Residues 697 to 886 form the Rho-GAP domain; that stretch reads CALAALCERE…LILQQCADIF (190 aa).

Interacts with SH3KBP1/CIN85. Expressed in germinal center B-cell, spleen, chronic lymphocytic leukemia, pancreatic cancer and lung cancer.

It localises to the cytoplasm. The protein resides in the membrane. Rho GTPase-activating protein which may be involved in clathrin-mediated endocytosis. GTPase activators for the Rho-type GTPases act by converting them to an inactive GDP-bound state. Has activity toward CDC42 and RAC1. This chain is Rho GTPase-activating protein 27, found in Homo sapiens (Human).